A 307-amino-acid polypeptide reads, in one-letter code: Adenosylcobinamide-GDP ribazoletransferase (307 aa).

8 consecutive transmembrane segments (helical) span residues 22 to 42, 58 to 78, 80 to 100, 137 to 157, 161 to 181, 212 to 232, 248 to 268, and 283 to 303; these read PLFE…VPGA, PFVG…IGPI, GVIH…WELL, FGLA…ASLV, VWWM…VTAL, TAAL…LTSV, AWLG…AALF, and CIGA…AVVA.

The protein belongs to the CobS family. Mg(2+) is required as a cofactor.

The protein resides in the cell membrane. It catalyses the reaction alpha-ribazole + adenosylcob(III)inamide-GDP = adenosylcob(III)alamin + GMP + H(+). It carries out the reaction alpha-ribazole 5'-phosphate + adenosylcob(III)inamide-GDP = adenosylcob(III)alamin 5'-phosphate + GMP + H(+). It functions in the pathway cofactor biosynthesis; adenosylcobalamin biosynthesis; adenosylcobalamin from cob(II)yrinate a,c-diamide: step 7/7. Functionally, joins adenosylcobinamide-GDP and alpha-ribazole to generate adenosylcobalamin (Ado-cobalamin). Also synthesizes adenosylcobalamin 5'-phosphate from adenosylcobinamide-GDP and alpha-ribazole 5'-phosphate. The polypeptide is Adenosylcobinamide-GDP ribazoletransferase (Corynebacterium glutamicum (strain ATCC 13032 / DSM 20300 / JCM 1318 / BCRC 11384 / CCUG 27702 / LMG 3730 / NBRC 12168 / NCIMB 10025 / NRRL B-2784 / 534)).